A 205-amino-acid polypeptide reads, in one-letter code: Cytochrome c biogenesis ATP-binding export protein CcmA 1 (205 aa).

The region spanning 2 to 205 is the ABC transporter domain; it reads LEARDLYCER…LALTGGEAGL (204 aa). 34 to 41 contacts ATP; that stretch reads GGNGAGKT.

This sequence belongs to the ABC transporter superfamily. CcmA exporter (TC 3.A.1.107) family. As to quaternary structure, the complex is composed of two ATP-binding proteins (CcmA) and two transmembrane proteins (CcmB).

The protein localises to the cell inner membrane. The enzyme catalyses heme b(in) + ATP + H2O = heme b(out) + ADP + phosphate + H(+). Functionally, part of the ABC transporter complex CcmAB involved in the biogenesis of c-type cytochromes; once thought to export heme, this seems not to be the case, but its exact role is uncertain. Responsible for energy coupling to the transport system. This is Cytochrome c biogenesis ATP-binding export protein CcmA 1 from Salmonella paratyphi A (strain ATCC 9150 / SARB42).